The chain runs to 555 residues: Pentatricopeptide repeat-containing protein At2g44880 (555 aa).

PPR repeat units lie at residues Asp-41–Ala-75, Asp-77–Ala-111, Asp-112–Arg-142, Ser-143–Val-173, Asp-175–Lys-205, Thr-206–Ser-240, Trp-241–Thr-267, Asp-273–Lys-307, Lys-308–Ser-342, Trp-343–Glu-370, Asp-373–Ala-407, and Lys-408–Glu-438. The type E motif stretch occupies residues Ile-443–Asn-518. The type E(+) motif stretch occupies residues Tyr-519–Asn-549.

Belongs to the PPR family. PCMP-E subfamily.

The sequence is that of Pentatricopeptide repeat-containing protein At2g44880 (PCMP-E9) from Arabidopsis thaliana (Mouse-ear cress).